The following is a 190-amino-acid chain: Adenylate kinase (190 aa).

12 to 17 is an ATP binding site; that stretch reads GSGKTT. Residues 34–63 form an NMP region; the sequence is STGELLRAEVASGSERGKIIEGFTSKGNLV. AMP-binding positions include Thr-35, Arg-40, 61-63, 88-91, and Gln-95; these read NLV and GYPR. An LID region spans residues 130–136; sequence GRARGAD. Arg-131 contacts ATP. Residues Arg-133 and Arg-145 each coordinate AMP. Arg-173 contacts ATP.

This sequence belongs to the adenylate kinase family. Monomer.

It is found in the cytoplasm. It catalyses the reaction AMP + ATP = 2 ADP. The protein operates within purine metabolism; AMP biosynthesis via salvage pathway; AMP from ADP: step 1/1. Its function is as follows. Catalyzes the reversible transfer of the terminal phosphate group between ATP and AMP. Plays an important role in cellular energy homeostasis and in adenine nucleotide metabolism. This chain is Adenylate kinase, found in Wolinella succinogenes (strain ATCC 29543 / DSM 1740 / CCUG 13145 / JCM 31913 / LMG 7466 / NCTC 11488 / FDC 602W) (Vibrio succinogenes).